A 267-amino-acid chain; its full sequence is 26S proteasome non-ATPase regulatory subunit 8 homolog A (267 aa).

At methionine 1 the chain carries N-acetylmethionine. Residues aspartate 79 to glutamine 251 form the PCI domain.

It belongs to the proteasome subunit S14 family. Component of the 19S regulatory particle (RP/PA700) lid subcomplex of the 26S proteasome. The 26S proteasome is composed of a core protease (CP), known as the 20S proteasome, capped at one or both ends by the 19S regulatory particle (RP/PA700). The RP/PA700 complex is composed of at least 17 different subunits in two subcomplexes, the base and the lid, which form the portions proximal and distal to the 20S proteolytic core, respectively. Interacts with PUB22 and PUB23. Binds to the translation initiation factors TIF3E1. Interacts with UCH1 and UCH2. In terms of processing, ubiquitinated by PUB22 and PUB23. As to expression, ubiquitous with highest expression in flowers.

Functionally, acts as a regulatory subunit of the 26S proteasome which is involved in the ATP-dependent degradation of ubiquitinated proteins. May help to control the degradation of one or more factors that repress cytokinin signaling. Plays an important role for balancing cell expansion with cell proliferation rates during shoot development. This chain is 26S proteasome non-ATPase regulatory subunit 8 homolog A, found in Arabidopsis thaliana (Mouse-ear cress).